The following is a 267-amino-acid chain: GTP cyclohydrolase FolE2 (267 aa).

This sequence belongs to the GTP cyclohydrolase IV family.

The enzyme catalyses GTP + H2O = 7,8-dihydroneopterin 3'-triphosphate + formate + H(+). It functions in the pathway cofactor biosynthesis; 7,8-dihydroneopterin triphosphate biosynthesis; 7,8-dihydroneopterin triphosphate from GTP: step 1/1. Functionally, converts GTP to 7,8-dihydroneopterin triphosphate. In Nitrosococcus oceani (strain ATCC 19707 / BCRC 17464 / JCM 30415 / NCIMB 11848 / C-107), this protein is GTP cyclohydrolase FolE2.